The following is a 528-amino-acid chain: MELKAEEEEVGGVQPVSIQAFASSSTLHGLAHIFSYERLSLKRALWALCFLGSLAVLLCVCTERVQYYFHYHHVTKLDEVAASQLTFPAVTLCNLNEFRFSQVSKNDLYHAGELLALLNNRYEIPDTQMADEKQLEILQDKANFRSFKPKPFNMREFYDRAGHDIRDMLLSCHFRGEVCSAEDFKVVFTRYGKCYTFNSGRDGRPRLKTMKGGTGNGLEIMLDIQQDEYLPVWGETDETSFEAGIKVQIHSQDEPPFIDQLGFGVAPGFQTFVACQEQRLIYLPPPWGTCKAVTMDSDLDFFDSYSITACRIDCETRYLVENCNCRMVHMPGDAPYCTPEQYKECADPALDFLVEKDQEYCVCEMPCNLTRYGKELSMVKIPSKASAKYLAKKFNKSEQYIGENILVLDIFFEVLNYETIEQKKAYEIAGLLGDIGGQMGLFIGASILTVLELFDYAYEVIKHKLCRRGKCQKEAKRSSADKGVALSLDDVKRHNPCESLRGHPAGMTYAANILPHHPARGTFEDFTC.

Topologically, residues 1-49 are cytoplasmic; it reads MELKAEEEEVGGVQPVSIQAFASSSTLHGLAHIFSYERLSLKRALWALC. Residues 50–66 form a helical membrane-spanning segment; it reads FLGSLAVLLCVCTERVQ. Residues 67-427 are Extracellular-facing; it reads YYFHYHHVTK…ETIEQKKAYE (361 aa). 7 disulfide bridges follow: C93/C194, C172/C179, C290/C367, C310/C363, C314/C361, C323/C345, and C325/C337. N-linked (GlcNAc...) asparagine glycans are attached at residues N368 and N395. Residues 428 to 458 form a discontinuously helical membrane-spanning segment; sequence IAGLLGDIGGQMGLFIGASILTVLELFDYAY. A GAS motif; ion selectivity filter motif is present at residues 444-446; it reads GAS. Topologically, residues 459-528 are cytoplasmic; it reads EVIKHKLCRR…ARGTFEDFTC (70 aa). S479 carries the phosphoserine; by PKA modification. At S499 the chain carries Phosphoserine.

It belongs to the amiloride-sensitive sodium channel (TC 1.A.6) family. ASIC1 subfamily. In terms of assembly, forms functional homotrimeric channels. Forms heterotrimers with other ASIC proteins, resulting in channels with distinct properties. Interacts with PICK1; regulates ASIC1 clustering in membranes. Interacts with STOM; alters heterotrimeric channels activity. In terms of processing, pH-gating could be regulated by serine proteases. Phosphorylation by PKA regulates interaction with PICK1 and subcellular localization. Phosphorylation by PKC may regulate the channel. As to expression, expressed in neurons throughout the central and peripheral nervous system.

It localises to the cell membrane. Its subcellular location is the postsynaptic cell membrane. It is found in the cell projection. The protein localises to the dendrite. It carries out the reaction Na(+)(in) = Na(+)(out). The catalysed reaction is K(+)(in) = K(+)(out). The enzyme catalyses Li(+)(in) = Li(+)(out). It catalyses the reaction Ca(2+)(in) = Ca(2+)(out). Its activity is regulated as follows. Potentiated by FMRFamide-related neuropeptides, which are induced during inflammation and modulate pain responses. Inhibited by the diuretic drug amiloride. Spider venom psalmotoxin-1 inhibits the channel by locking it in its desensitized conformation. The homotrimeric channel is inhibited by the spider venom pi-theraphotoxin-Hm3a. Homotrimeric and heterotrimeric (with ASIC2 isoform 1) channels are inhibited by the snake venom mambalgin-1, which prevents proton-induced transitions from the resting closed state to the active and/or desensitized states. Inhibited by Texas coral snake toxin MitTx1. Forms voltage-independent, pH-gated trimeric sodium channels that act as postsynaptic excitatory receptors in the nervous system, playing a crucial role in regulating synaptic plasticity, learning, and memory. Upon extracellular pH drop this channel elicits transient, fast activating, and completely desensitizing inward currents. Displays high selectivity for sodium ions but can also permit the permeation of other cations. Regulates more or less directly intracellular calcium concentration and CaMKII phosphorylation, and thereby the density of dendritic spines. Modulates neuronal activity in the circuits underlying innate fear. In terms of biological role, has high selectivity for sodium ions, but can also be permeable to other cations including calcium, lithium and potassium. Its function is as follows. Produces acid activated currents with a reduced amplitude and inactivates faster. Has high selectivity for sodium ions but also supports a calcium-mediated current which is sustained and maintained as long as acidic conditions are present. Also potentially permeable to lithium and potassium. Functionally, has no measurable proton-gated sodium channel activity in vitro. The protein is Acid-sensing ion channel 1 of Homo sapiens (Human).